A 448-amino-acid chain; its full sequence is Exodeoxyribonuclease 7 large subunit (448 aa).

Belongs to the XseA family. As to quaternary structure, heterooligomer composed of large and small subunits.

Its subcellular location is the cytoplasm. The catalysed reaction is Exonucleolytic cleavage in either 5'- to 3'- or 3'- to 5'-direction to yield nucleoside 5'-phosphates.. Bidirectionally degrades single-stranded DNA into large acid-insoluble oligonucleotides, which are then degraded further into small acid-soluble oligonucleotides. This is Exodeoxyribonuclease 7 large subunit from Shewanella baltica (strain OS155 / ATCC BAA-1091).